Reading from the N-terminus, the 338-residue chain is Probable beta-1,4-xylosyltransferase IRX9 (338 aa).

The disordered stretch occupies residues M1–S21. Residues M1–R27 lie on the Cytoplasmic side of the membrane. The chain crosses the membrane as a helical; Signal-anchor for type II membrane protein span at residues A28–A46. At P47–L338 the chain is on the lumenal side. N-linked (GlcNAc...) asparagine glycans are attached at residues N232 and N314.

It belongs to the glycosyltransferase 43 family.

It localises to the golgi apparatus membrane. Its function is as follows. Probable beta-1,4-xylosyltransferase involved in xylan biosynthesis in cell walls. The protein is Probable beta-1,4-xylosyltransferase IRX9 of Oryza sativa subsp. japonica (Rice).